The chain runs to 311 residues: Methionyl-tRNA formyltransferase (311 aa).

Serine 110 to proline 113 provides a ligand contact to (6S)-5,6,7,8-tetrahydrofolate.

This sequence belongs to the Fmt family.

The catalysed reaction is L-methionyl-tRNA(fMet) + (6R)-10-formyltetrahydrofolate = N-formyl-L-methionyl-tRNA(fMet) + (6S)-5,6,7,8-tetrahydrofolate + H(+). Its function is as follows. Attaches a formyl group to the free amino group of methionyl-tRNA(fMet). The formyl group appears to play a dual role in the initiator identity of N-formylmethionyl-tRNA by promoting its recognition by IF2 and preventing the misappropriation of this tRNA by the elongation apparatus. The polypeptide is Methionyl-tRNA formyltransferase (Streptococcus pyogenes serotype M3 (strain ATCC BAA-595 / MGAS315)).